The chain runs to 300 residues: 33 kDa chaperonin (300 aa).

Cystine bridges form between cysteine 235-cysteine 237 and cysteine 269-cysteine 272.

It belongs to the HSP33 family. Post-translationally, under oxidizing conditions two disulfide bonds are formed involving the reactive cysteines. Under reducing conditions zinc is bound to the reactive cysteines and the protein is inactive.

It is found in the cytoplasm. Functionally, redox regulated molecular chaperone. Protects both thermally unfolding and oxidatively damaged proteins from irreversible aggregation. Plays an important role in the bacterial defense system toward oxidative stress. The polypeptide is 33 kDa chaperonin (Pseudomonas fluorescens (strain Pf0-1)).